We begin with the raw amino-acid sequence, 145 residues long: Ubiquitin-conjugating enzyme E2 variant 1C (145 aa).

A UBC core domain is found at 12-145 (PRNFRLLEEL…LVQPPEGTFF (134 aa)).

This sequence belongs to the ubiquitin-conjugating enzyme family. As to quaternary structure, heterodimer with UBC35 or UBC36. In terms of tissue distribution, expressed in roots, shoots, leaves, stems and flowers, but not in pollen.

Has no ubiquitin ligase activity on its own. The heterodimer with UBC catalyzes the synthesis of non-canonical poly-ubiquitin chains that are linked through 'Lys-63'. This type of poly-ubiquitination does not lead to protein degradation by the proteasome. Mediates transcriptional activation of target genes. May play a role in the control of progress through the cell cycle and differentiation. May play a role in the error-free DNA repair pathway and contributes to the survival of cells after DNA damage. This chain is Ubiquitin-conjugating enzyme E2 variant 1C (UEV1C), found in Arabidopsis thaliana (Mouse-ear cress).